The sequence spans 206 residues: Small ribosomal subunit protein uS4 (206 aa).

An S4 RNA-binding domain is found at 98–155 (TRLDNVVYRLGWALSRAQARQIVSHGKIAVNGKRVNIPSYNLKPGDVVELLDKDLIPV).

The protein belongs to the universal ribosomal protein uS4 family. As to quaternary structure, part of the 30S ribosomal subunit. Contacts protein S5. The interaction surface between S4 and S5 is involved in control of translational fidelity.

One of the primary rRNA binding proteins, it binds directly to 16S rRNA where it nucleates assembly of the body of the 30S subunit. Its function is as follows. With S5 and S12 plays an important role in translational accuracy. This is Small ribosomal subunit protein uS4 from Dictyoglomus turgidum (strain DSM 6724 / Z-1310).